A 139-amino-acid chain; its full sequence is Probable disulfide formation protein C (139 aa).

The chain crosses the membrane as a helical span at residues 8 to 27; sequence EYALLTAWGASFIATLGSLY. A disulfide bridge links cysteine 37 with cysteine 40. The next 2 helical transmembrane spans lie at 42-61 and 68-85; these read YQRI…VAKK and YSLP…YHYA. Cysteine 99 and cysteine 104 are disulfide-bonded. Residues 113 to 135 traverse the membrane as a helical segment; that stretch reads GFVTIPFLALIGFITIAVCSFIV.

Belongs to the DsbB family. BdbC subfamily.

Its subcellular location is the cell membrane. Required for disulfide bond formation in some proteins. The protein is Probable disulfide formation protein C of Bacillus cereus (strain ATCC 14579 / DSM 31 / CCUG 7414 / JCM 2152 / NBRC 15305 / NCIMB 9373 / NCTC 2599 / NRRL B-3711).